We begin with the raw amino-acid sequence, 144 residues long: Aspartate carbamoyltransferase regulatory chain (144 aa).

Zn(2+) contacts are provided by cysteine 103, cysteine 108, cysteine 132, and cysteine 135.

It belongs to the PyrI family. Contains catalytic and regulatory chains. Zn(2+) serves as cofactor.

In terms of biological role, involved in allosteric regulation of aspartate carbamoyltransferase. In Clostridium tetani (strain Massachusetts / E88), this protein is Aspartate carbamoyltransferase regulatory chain.